Reading from the N-terminus, the 225-residue chain is Ribonuclease 3 (225 aa).

The RNase III domain occupies 5 to 127 (IDKLERKIGY…IIGAVYLDSD (123 aa)). Residue Glu40 participates in Mg(2+) binding. Residue Asp44 is part of the active site. The Mg(2+) site is built by Asp113 and Glu116. The active site involves Glu116. Positions 154–224 (DPKTRLQEFL…AETALEQLSN (71 aa)) constitute a DRBM domain.

Belongs to the ribonuclease III family. As to quaternary structure, homodimer. Requires Mg(2+) as cofactor.

It localises to the cytoplasm. It catalyses the reaction Endonucleolytic cleavage to 5'-phosphomonoester.. Functionally, digests double-stranded RNA. Involved in the processing of primary rRNA transcript to yield the immediate precursors to the large and small rRNAs (23S and 16S). Processes some mRNAs, and tRNAs when they are encoded in the rRNA operon. Processes pre-crRNA and tracrRNA of type II CRISPR loci if present in the organism. This Vibrio atlanticus (strain LGP32) (Vibrio splendidus (strain Mel32)) protein is Ribonuclease 3.